The sequence spans 2431 residues: Nucleoprotein TPR (2431 aa).

The segment at 1–48 is disordered; it reads MTSGGSASRSGHRGVPMTSRGFDGSRRGSLRRAGARETASEAADGAAP. Residues 77–87 form a sufficient for interaction with TPR region; it reads AVLQQVLERPE. Residues 88 to 191 are necessary for interaction with HSF1; sequence LNKLPKSTQN…GIQSQFTRAK (104 aa). Positions 98–444 form a coiled coil; that stretch reads KLEKFLAEQQ…SATKRKGAIL (347 aa). N6-acetyllysine occurs at positions 326, 386, and 419. Residue serine 453 is modified to Phosphoserine. Positions 486-678 form a coiled coil; it reads EKQENKRINK…ESRQHQMQLV (193 aa). Lysine 502, lysine 531, and lysine 551 each carry N6-acetyllysine. The interval 511–587 is necessary for association to the NPC; that stretch reads LKRQREEYER…LMELEEARGN (77 aa). Serine 596, serine 597, and serine 706 each carry phosphoserine. The stretch at 736–1246 forms a coiled coil; that stretch reads STEAIEAKAA…IEKLSDKVVT (511 aa). N6-acetyllysine occurs at positions 787, 797, 822, and 829. Residues 989–998 are compositionally biased toward polar residues; it reads LASQSTQRTG. Positions 989–1011 are disordered; it reads LASQSTQRTGKGQPGDRDDVDDL. Positions 1002 to 1011 are enriched in basic and acidic residues; sequence PGDRDDVDDL. Phosphoserine is present on serine 1259. Coiled-coil stretches lie at residues 1289–1494 and 1547–1700; these read EVAQ…LDAK and VQEM…QRDE. A necessary for interaction with HSF1 region spans residues 1292–1394; that stretch reads QVESLRYRQR…NAELSEKSGM (103 aa). Positions 1689–1701 are enriched in basic and acidic residues; sequence EHQERHLEQRDEP. A disordered region spans residues 1689 to 1744; it reads EHQERHLEQRDEPQEPTNKAPEQQRQITLKTTPASGERGIASTSDPPTANIKPTPV. Residues 1703-1722 are compositionally biased toward polar residues; the sequence is EPTNKAPEQQRQITLKTTPA. Lysine 1760 is subject to N6-acetyllysine. Threonine 1762 carries the phosphothreonine modification. The span at 1873–1898 shows a compositional bias: polar residues; the sequence is SSPVERPSTSTAVFGTVSATPSSSLP. The interval 1873-2193 is disordered; it reads SSPVERPSTS…TPGIGGMQQH (321 aa). Positions 1882–1937 are sufficient and essential for mediating its nuclear import; that stretch reads STAVFGTVSATPSSSLPKRTREEEEDSTMEAGDQVSEDTVEMPLPKKLKMVTPVGT. The span at 1937-1951 shows a compositional bias: acidic residues; sequence TEEEVMAEESTDGEA. Residues 1954–1963 show a composition bias toward polar residues; that stretch reads QAYNQDSQDS. The residue at position 1963 (serine 1963) is a Phosphoserine. Low complexity predominate over residues 1994 to 2005; the sequence is QSDQQTTSSQDG. Acidic residues-rich tracts occupy residues 2016-2057 and 2067-2088; these read DSDD…EDSN and DGYE…ETEE. The span at 2100-2132 shows a compositional bias: polar residues; the sequence is ADSQNSGEGNTSAAESSFSQEVAREQQPTSASE. 5 positions are modified to phosphoserine: serine 2102, serine 2105, serine 2116, serine 2118, and serine 2141. Omega-N-methylarginine occurs at positions 2174 and 2179. 2 positions are modified to phosphothreonine: threonine 2184 and threonine 2205. Serine 2223 is modified (phosphoserine). Arginine 2231 bears the Omega-N-methylarginine mark. The segment covering 2295–2312 has biased composition (polar residues); that stretch reads ESTTSDASEHASQSVPMV. The segment at 2295–2431 is disordered; sequence ESTTSDASEH…RGGINRGNIN (137 aa). The segment covering 2313–2325 has biased composition (low complexity); that stretch reads TTSTGTLSTTNET. Positions 2327-2340 are enriched in acidic residues; the sequence is AGDDGDEVFVEAES. The span at 2341 to 2351 shows a compositional bias: low complexity; the sequence is EGISSEAGLEI. Residues 2353-2367 are compositionally biased toward acidic residues; sequence SQQEEEPVQASDESD. The span at 2368-2388 shows a compositional bias: low complexity; it reads LPSTSQDPPSSSSVDTSSSQP. Asymmetric dimethylarginine is present on residues arginine 2411, arginine 2413, and arginine 2422. A compositionally biased stretch (gly residues) spans 2420–2431; it reads GGRGGINRGNIN.

Belongs to the TPR family. As to quaternary structure, homodimer. Part of the nuclear pore complex (NPC). Associates with the XPO1/CRM1-mediated nuclear export complex, the Importin alpha/Importin beta receptor and the dynein 1 complex. Interacts (via C-terminal domain) with the KPNB1; the interaction occurs in a RanGTP-dependent manner. Interacts (via C-terminal region and phosphorylated form) with MAPK1/ERK2 (via phosphorylated form); the interaction requires dimerization of MAPK1/ERK2 and increases following EGF stimulation. Interacts with MAPK3/ERK1; the interaction increases following EGF stimulation. Interacts (via coiled coil region) with NUP153; the interaction is direct. Interacts with HSF1; the interaction increases in a stress-responsive manner and stimulates export of stress-induced HSP70 mRNA. Interacts with huntingtin/HTT; the interaction is inhibited by aggregated huntingtin/HTT forms with expanded polyglutamine stretch. Interacts with MAD1L1 (via N-terminal region), MAD2L1, and TTK; the interactions occurs in a microtubule-independent manner. Interacts (via middle region) with DYNLL1. Interacts with DCTN1, dynein, NUP153 and tubulin. Interacts with MTA1. Interacts with IFI204 (via C-terminal region). Interacts with IFI203. Interacts with ZC3HC1; this interaction mediates ZC3HC1 nuclear envelopes (NE)-association but also required for proper positioning of a substantial amount of TPR at the nuclear basket (NB). Post-translationally, phosphorylated. Phosphorylation occurs on serine and threonine residues (comprised in the C-terminal region) by MAPK1/ERK2 and stabilizes the interaction between these two proteins. In terms of tissue distribution, expressed in the heart, liver, kidney, spleen, lung and skeletal muscles.

It localises to the nucleus. The protein localises to the nucleus membrane. The protein resides in the nucleus envelope. Its subcellular location is the nuclear pore complex. It is found in the cytoplasm. It localises to the cytoskeleton. The protein localises to the spindle. The protein resides in the chromosome. Its subcellular location is the centromere. It is found in the kinetochore. In terms of biological role, component of the nuclear pore complex (NPC), a complex required for the trafficking across the nuclear envelope. Functions as a scaffolding element in the nuclear phase of the NPC essential for normal nucleocytoplasmic transport of proteins and mRNAs, plays a role in the establishment of nuclear-peripheral chromatin compartmentalization in interphase, and in the mitotic spindle checkpoint signaling during mitosis. Involved in the quality control and retention of unspliced mRNAs in the nucleus; in association with NUP153, regulates the nuclear export of unspliced mRNA species bearing constitutive transport element (CTE) in a NXF1- and KHDRBS1-independent manner. Negatively regulates both the association of CTE-containing mRNA with large polyribosomes and translation initiation. Does not play any role in Rev response element (RRE)-mediated export of unspliced mRNAs. Implicated in nuclear export of mRNAs transcribed from heat shock gene promoters; associates both with chromatin in the HSP70 promoter and with mRNAs transcribed from this promoter under stress-induced conditions. Plays a limited role in the regulation of nuclear protein export. Modulates the nucleocytoplasmic transport of activated MAPK1/ERK2 and huntingtin/HTT and may serve as a docking site for the XPO1/CRM1-mediated nuclear export complex. Also plays a role as a structural and functional element of the perinuclear chromatin distribution; involved in the formation and/or maintenance of NPC-associated perinuclear heterochromatin exclusion zones (HEZs). Finally, acts as a spatial regulator of the spindle-assembly checkpoint (SAC) response ensuring a timely and effective recruitment of spindle checkpoint proteins like MAD1L1 and MAD2L1 to unattached kinetochore during the metaphase-anaphase transition before chromosome congression. Its N-terminus is involved in activation of oncogenic kinases. The sequence is that of Nucleoprotein TPR from Mus musculus (Mouse).